Reading from the N-terminus, the 271-residue chain is Proteasome inhibitor PI31 subunit (271 aa).

Ala2 carries the post-translational modification N-acetylalanine. Residues 2–150 (AGLEVLFASA…PIHEQWEKAR (149 aa)) are important for homodimerization and interaction with FBXO7. Residues Ser153 and Ser189 each carry the phosphoserine modification. An Omega-N-methylarginine modification is found at Arg205. Arg219 carries the post-translational modification Asymmetric dimethylarginine. The disordered stretch occupies residues 226-271 (SGLPNRLPPGAVPPGARFDPFGPIGTSPSGPNPDHLPPPGYDDMYL). Arg231 carries the omega-N-methylarginine modification. Ser252 carries the phosphoserine modification. A compositionally biased stretch (pro residues) spans 255–265 (GPNPDHLPPPG).

Belongs to the proteasome inhibitor PI31 family. As to quaternary structure, monomer and homodimer. Interacts with FBXO7.

It localises to the cytoplasm. Its subcellular location is the endoplasmic reticulum. In terms of biological role, plays an important role in control of proteasome function. Inhibits the hydrolysis of protein and peptide substrates by the 20S proteasome. Also inhibits the activation of the proteasome by the proteasome regulatory proteins PA700 and PA28. The protein is Proteasome inhibitor PI31 subunit (Psmf1) of Mus musculus (Mouse).